The chain runs to 105 residues: Small ribosomal subunit protein bS6 (105 aa).

This sequence belongs to the bacterial ribosomal protein bS6 family.

Binds together with bS18 to 16S ribosomal RNA. The polypeptide is Small ribosomal subunit protein bS6 (Lawsonia intracellularis (strain PHE/MN1-00)).